A 371-amino-acid polypeptide reads, in one-letter code: uncharacterized protein (371 aa).

Belongs to the Gfo/Idh/MocA family.

This is an uncharacterized protein from Synechocystis sp. (strain ATCC 27184 / PCC 6803 / Kazusa).